The sequence spans 328 residues: MNSPQNVSTKKVTVTGAAGQISYSLLWRIANGEVFGTETPVELKLLEIPQALGGAEGVAMELLDSAFPLLRNITITADANEAFDGANAAFLVGAKPRGKGEERADLLANNGKIFGPQGKAINDNAADDIRVLVVGNPANTNALIASAAAPDVPASRFNAMMRLDHNRAISQLATKLGRGSAEFNNIVVWGNHSATQFPDITYATVGGEKVTDLVDHDWYVEEFIPRVANRGAEIIEVRGKSSAASAASSAIDHMRDWVQGTEAWSSAAIPSTGAYGIPEGIFVGLPTVSRNGEWEIVEGLEISDFQRARIDANAQELQAEREAVRDLL.

16–22 (GAAGQIS) contributes to the NAD(+) binding site. Residues Arg-97 and Arg-103 each coordinate substrate. NAD(+) contacts are provided by residues Asn-110, Gln-117, and 134–136 (VGN). The substrate site is built by Asn-136 and Arg-167. Catalysis depends on His-192, which acts as the Proton acceptor.

The protein belongs to the LDH/MDH superfamily. MDH type 2 family.

It carries out the reaction (S)-malate + NAD(+) = oxaloacetate + NADH + H(+). In terms of biological role, catalyzes the reversible oxidation of malate to oxaloacetate. This is Malate dehydrogenase from Corynebacterium glutamicum (strain R).